The chain runs to 309 residues: D-alanine--D-alanine ligase (309 aa).

Residues 110 to 305 form the ATP-grasp domain; the sequence is KLCWTGAGLP…FQELVWHILE (196 aa). Position 136–191 (136–191) interacts with ATP; the sequence is RQALGFPVIVKPAEEGSSIGMSRAATAEELAQAWERASGYGCAVFAERWIDGVEYT. Asp-259, Glu-272, and Asn-274 together coordinate Mg(2+).

The protein belongs to the D-alanine--D-alanine ligase family. Mg(2+) is required as a cofactor. Requires Mn(2+) as cofactor.

It is found in the cytoplasm. It carries out the reaction 2 D-alanine + ATP = D-alanyl-D-alanine + ADP + phosphate + H(+). Its pathway is cell wall biogenesis; peptidoglycan biosynthesis. Its function is as follows. Cell wall formation. This is D-alanine--D-alanine ligase from Methylococcus capsulatus (strain ATCC 33009 / NCIMB 11132 / Bath).